The chain runs to 118 residues: Large ribosomal subunit protein uL18 (118 aa).

Basic and acidic residues predominate over residues 1-10 (MKTTRRDATR). A disordered region spans residues 1–20 (MKTTRRDATRSRHQRVRRKV). Residues 11 to 20 (SRHQRVRRKV) show a composition bias toward basic residues.

This sequence belongs to the universal ribosomal protein uL18 family. As to quaternary structure, part of the 50S ribosomal subunit; part of the 5S rRNA/L5/L18/L25 subcomplex. Contacts the 5S and 23S rRNAs.

In terms of biological role, this is one of the proteins that bind and probably mediate the attachment of the 5S RNA into the large ribosomal subunit, where it forms part of the central protuberance. This chain is Large ribosomal subunit protein uL18, found in Acaryochloris marina (strain MBIC 11017).